Here is a 303-residue protein sequence, read N- to C-terminus: Oxygen-dependent coproporphyrinogen-III oxidase (303 aa).

Ser93 provides a ligand contact to substrate. A divalent metal cation contacts are provided by His97 and His107. His107 serves as the catalytic Proton donor. Residue 109–111 (NVR) coordinates substrate. The a divalent metal cation site is built by His146 and His176. The tract at residues 241 to 276 (YVEFNLVYDRGTLFGLQSGGRTESILMSLPPQVRWG) is important for dimerization. Residue 259-261 (GGR) participates in substrate binding.

The protein belongs to the aerobic coproporphyrinogen-III oxidase family. As to quaternary structure, homodimer. It depends on a divalent metal cation as a cofactor.

It is found in the cytoplasm. The enzyme catalyses coproporphyrinogen III + O2 + 2 H(+) = protoporphyrinogen IX + 2 CO2 + 2 H2O. It functions in the pathway porphyrin-containing compound metabolism; protoporphyrin-IX biosynthesis; protoporphyrinogen-IX from coproporphyrinogen-III (O2 route): step 1/1. Involved in the heme biosynthesis. Catalyzes the aerobic oxidative decarboxylation of propionate groups of rings A and B of coproporphyrinogen-III to yield the vinyl groups in protoporphyrinogen-IX. This is Oxygen-dependent coproporphyrinogen-III oxidase from Pseudomonas entomophila (strain L48).